Reading from the N-terminus, the 125-residue chain is Photosystem II extrinsic protein U (125 aa).

The first 29 residues, 1-29, serve as a signal peptide directing secretion; the sequence is MKRLLSWLTGLVVMAGLLFSLATPSGVQA.

Belongs to the PsbU family. In terms of assembly, PSII is composed of 1 copy each of membrane proteins PsbA, PsbB, PsbC, PsbD, PsbE, PsbF, PsbH, PsbI, PsbJ, PsbK, PsbL, PsbM, PsbT, PsbX, PsbY, PsbZ, Psb30/Ycf12, peripheral proteins PsbO, CyanoQ (PsbQ), PsbU, PsbV and a large number of cofactors. It forms dimeric complexes.

The protein resides in the cellular thylakoid membrane. In terms of biological role, one of the extrinsic, lumenal subunits of photosystem II (PSII). PSII is a light-driven water plastoquinone oxidoreductase, using light energy to abstract electrons from H(2)O, generating a proton gradient subsequently used for ATP formation. The extrinsic proteins stabilize the structure of photosystem II oxygen-evolving complex (OEC), the ion environment of oxygen evolution and protect the OEC against heat-induced inactivation. The chain is Photosystem II extrinsic protein U from Synechococcus sp. (strain WH7803).